A 137-amino-acid chain; its full sequence is Large ribosomal subunit protein uL16 (137 aa).

Positions 1 to 16 are enriched in basic residues; sequence MLQPKRTKFRKMQKGR. Residues 1–22 form a disordered region; that stretch reads MLQPKRTKFRKMQKGRIRGEAK.

It belongs to the universal ribosomal protein uL16 family. As to quaternary structure, part of the 50S ribosomal subunit.

In terms of biological role, binds 23S rRNA and is also seen to make contacts with the A and possibly P site tRNAs. The chain is Large ribosomal subunit protein uL16 from Jannaschia sp. (strain CCS1).